Reading from the N-terminus, the 525-residue chain is Probable bifunctional tRNA threonylcarbamoyladenosine biosynthesis protein (525 aa).

Positions methionine 1–tryptophan 322 are kae1. 3 residues coordinate Fe cation: histidine 106, histidine 110, and tyrosine 127. Residues tyrosine 127–alanine 131, aspartate 159, glycine 172, glutamate 176, and asparagine 255 contribute to the L-threonylcarbamoyladenylate site. Residue aspartate 283 participates in Fe cation binding. One can recognise a Protein kinase domain in the interval alanine 331–leucine 525. ATP-binding positions include alanine 338–valine 346 and lysine 355. The active-site Proton acceptor; for kinase activity is aspartate 442.

It in the N-terminal section; belongs to the KAE1 / TsaD family. The protein in the C-terminal section; belongs to the protein kinase superfamily. Tyr protein kinase family. BUD32 subfamily. As to quaternary structure, component of the KEOPS complex that consists of Kae1, Bud32, Cgi121 and Pcc1; the whole complex dimerizes. Requires Fe(2+) as cofactor.

Its subcellular location is the cytoplasm. It catalyses the reaction L-seryl-[protein] + ATP = O-phospho-L-seryl-[protein] + ADP + H(+). The enzyme catalyses L-threonyl-[protein] + ATP = O-phospho-L-threonyl-[protein] + ADP + H(+). It carries out the reaction L-threonylcarbamoyladenylate + adenosine(37) in tRNA = N(6)-L-threonylcarbamoyladenosine(37) in tRNA + AMP + H(+). Functionally, required for the formation of a threonylcarbamoyl group on adenosine at position 37 (t(6)A37) in tRNAs that read codons beginning with adenine. Is a component of the KEOPS complex that is probably involved in the transfer of the threonylcarbamoyl moiety of threonylcarbamoyl-AMP (TC-AMP) to the N6 group of A37. The Kae1 domain likely plays a direct catalytic role in this reaction. The Bud32 domain probably displays kinase activity that regulates Kae1 function. The chain is Probable bifunctional tRNA threonylcarbamoyladenosine biosynthesis protein from Methanocorpusculum labreanum (strain ATCC 43576 / DSM 4855 / Z).